The chain runs to 346 residues: Dehydrogenase orf1 (346 aa).

43-48 (VDYATQ) is an NADP(+) binding site. Residue 133–140 (LAFSTAIV) coordinates substrate. NADP(+) contacts are provided by residues 170-173 (ATSV), 193-196 (SPHN), tyrosine 211, and 251-252 (LN). 269–273 (APPNV) is a binding site for substrate. Residue 336-337 (VS) coordinates NADP(+).

This sequence belongs to the zinc-containing alcohol dehydrogenase family.

Its pathway is secondary metabolite biosynthesis. Dehydrogenase; part of the gene cluster that mediates the biosynthesis of nigerpyrone and its derivatives carbonarone A and pestalamide A. The biosynthesis pathway begins with the polyketide assembly by epaA to form phenylacetyl triketide precursor from successive condensation of two malonyl-CoA, presumably with one phenylacetyl-CoA starter unit produced by the phenylacetyl-CoA ligase epaB. For the nigerpyrone biosynthesis, the reactive polyketide chain is released as an aldehyde through the R-domain. A nonenzymatic cyclization and dehydration may create nigerpyrone. For the biosynthesis of carbonarone A and pestalamide A, an extra methyl group is added through the C-methyltransferase domain. Several further steps involving the dehydrogenase orf1, the cytochrome P450 monooxygenase orf2 and the FAD-dependent monooxygenase orf3 are required to form a carbonarone A precursor which is converted to carbonarone A via cyclization. The O-acetyltransferase epaC could catalyze the transfer of 2-methylsuccinyl-CoA, a common intermediate in the ethylmalonyl-CoA pathway, to generate the final product pestalamide A. This is Dehydrogenase orf1 from Aspergillus niger (strain ATCC MYA-4892 / CBS 513.88 / FGSC A1513).